The chain runs to 484 residues: MTATIEETQETGSAGVGRIARVIGPVVDVEFPVDSMPEIYNKLECELTLEGEAKILSLEVAQHIGDGMVRAISLQPTDGLVRGAQVTDTGGPITVPVGDATLGKVFNTLGEVLNLEEGETFEVKERWGIHRKAPAFDQLESKTQMFETGIKVIDLLTPYVQGGKIGLFGGAGVGKTVLIQEMIARVAKDHGGVSVFAGVGERTREGNDLIVEMEEAGVIGQTALVFGQMDEPPGTRLRVALSALTMAEYFRDVQGQDVLLFIDNIFRFTQAGSEVSTLLGRMPSAVGYQPNLADEMGTLQERITSTRGHSITSMQAIYVPADDYTDPAPATTFAHLDATTELSREIASLGIYPAVDPLTSTSRILDPQYIGQAHYDCAIRIKQILQRNKELQDIIAILGVDELSEEDKIIVSRARRIQRFLSQNTYVAKQFTGIEGSTVPVSETIEGFNKIADGEYDHVAEQAFFMCGGLDDVEQKWAEIQKSL.

169–176 contacts ATP; sequence GGAGVGKT.

It belongs to the ATPase alpha/beta chains family. In terms of assembly, F-type ATPases have 2 components, CF(1) - the catalytic core - and CF(0) - the membrane proton channel. CF(1) has five subunits: alpha(3), beta(3), gamma(1), delta(1), epsilon(1). CF(0) has three main subunits: a(1), b(2) and c(9-12). The alpha and beta chains form an alternating ring which encloses part of the gamma chain. CF(1) is attached to CF(0) by a central stalk formed by the gamma and epsilon chains, while a peripheral stalk is formed by the delta and b chains.

The protein localises to the cell membrane. It catalyses the reaction ATP + H2O + 4 H(+)(in) = ADP + phosphate + 5 H(+)(out). Functionally, produces ATP from ADP in the presence of a proton gradient across the membrane. The catalytic sites are hosted primarily by the beta subunits. The sequence is that of ATP synthase subunit beta from Nocardioides sp. (strain ATCC BAA-499 / JS614).